Here is a 436-residue protein sequence, read N- to C-terminus: NAD(P)-dependent benzaldehyde dehydrogenase (436 aa).

NADP(+) contacts are provided by residues 117-119 (GPF), 143-147 (KPSET), 175-178 (RDEN), 193-194 (GS), 215-216 (EL), C249, and 337-339 (ELF). Catalysis depends on residues E215 and C249.

It belongs to the aldehyde dehydrogenase family.

It catalyses the reaction benzaldehyde + NAD(+) + H2O = benzoate + NADH + 2 H(+). The enzyme catalyses benzaldehyde + NADP(+) + H2O = benzoate + NADPH + 2 H(+). It functions in the pathway aromatic compound metabolism; (R)-mandelate degradation; benzoate from (R)-mandelate: step 4/4. In terms of biological role, NAD or NADP-dependent benzaldehyde dehydrogenase that catalyzes the conversion of benzaldehyde into benzoate in the (R)-mandelate degradation pathway. The polypeptide is NAD(P)-dependent benzaldehyde dehydrogenase (mdlD) (Pseudomonas putida (Arthrobacter siderocapsulatus)).